The following is a 24-amino-acid chain: SM-11044-binding protein (24 aa).

May mediate relaxation of depolarized colon tonus. It binds iodocyanopindolol and SM-11044. The protein is SM-11044-binding protein of Rattus norvegicus (Rat).